Reading from the N-terminus, the 214-residue chain is Guanylate kinase (214 aa).

In terms of domain architecture, Guanylate kinase-like spans 6-192; it reads GTLYIISAPS…ALEDLKAIFR (187 aa). Residue 13–20 coordinates ATP; it reads APSGAGKT.

It belongs to the guanylate kinase family.

It localises to the cytoplasm. The enzyme catalyses GMP + ATP = GDP + ADP. Its function is as follows. Essential for recycling GMP and indirectly, cGMP. The protein is Guanylate kinase of Pseudomonas syringae pv. syringae (strain B728a).